The primary structure comprises 583 residues: Bifunctional dihydrofolate reductase-thymidylate synthase (583 aa).

A DHFR domain is found at 9 to 229 (DIYAICACCK…TTLDFVIYSK (221 aa)). 36–42 (GLGNEGG) provides a ligand contact to NADP(+). Asp51 lines the substrate pocket. Residues 104 to 106 (KAS) and 125 to 128 (LSRT) contribute to the NADP(+) site. 3 residues coordinate substrate: Ile165, Tyr171, and Thr186. Residue 166 to 173 (GGASVYKE) coordinates NADP(+). Residues 298-583 (HPEYQYLNII…HDKISMDMAA (286 aa)) form a thymidylate synthase region. Residue Arg320 participates in dUMP binding. Residue Cys465 is part of the active site. Residues His466, 484-488 (QRSCD), Asn496, and 526-528 (HVY) contribute to the dUMP site.

It in the N-terminal section; belongs to the dihydrofolate reductase family. In the C-terminal section; belongs to the thymidylate synthase family. Homodimer.

It catalyses the reaction (6S)-5,6,7,8-tetrahydrofolate + NADP(+) = 7,8-dihydrofolate + NADPH + H(+). The enzyme catalyses dUMP + (6R)-5,10-methylene-5,6,7,8-tetrahydrofolate = 7,8-dihydrofolate + dTMP. It participates in cofactor biosynthesis; tetrahydrofolate biosynthesis; 5,6,7,8-tetrahydrofolate from 7,8-dihydrofolate: step 1/1. In terms of biological role, bifunctional enzyme. Involved in de novo dTMP biosynthesis. Key enzyme in folate metabolism. Catalyzes an essential reaction for de novo glycine and purine synthesis, DNA precursor synthesis, and for the conversion of dUMP to dTMP. This Plasmodium chabaudi protein is Bifunctional dihydrofolate reductase-thymidylate synthase.